Consider the following 78-residue polypeptide: Protein FAM240B (78 aa).

The protein belongs to the FAM240 family.

This chain is Protein FAM240B, found in Homo sapiens (Human).